The following is a 1517-amino-acid chain: DNA-directed RNA polymerase subunit beta' (1517 aa).

Residues C71, C73, C86, and C89 each contribute to the Zn(2+) site. Mg(2+) contacts are provided by D482, D484, and D486. Zn(2+) contacts are provided by C812, C886, C893, and C896.

The protein belongs to the RNA polymerase beta' chain family. In terms of assembly, the RNAP catalytic core consists of 2 alpha, 1 beta, 1 beta' and 1 omega subunit. When a sigma factor is associated with the core the holoenzyme is formed, which can initiate transcription. Requires Mg(2+) as cofactor. Zn(2+) serves as cofactor.

It carries out the reaction RNA(n) + a ribonucleoside 5'-triphosphate = RNA(n+1) + diphosphate. Its function is as follows. DNA-dependent RNA polymerase catalyzes the transcription of DNA into RNA using the four ribonucleoside triphosphates as substrates. This Campylobacter jejuni subsp. jejuni serotype O:6 (strain 81116 / NCTC 11828) protein is DNA-directed RNA polymerase subunit beta'.